Consider the following 449-residue polypeptide: PPKPQPKPPPKPQPKPPPAPTPSPCPPQPPKPQPKPPPAPTPSPCPPQPPKPQPKPPPAPGPSPKPGPSPSPPKPPPSPAPKPVPPPSPSPKPSPPKPPAPSPKPSPPKPPAPSPPKPQNKTIPAVFFFGDSIFDTGNNNNLDTKLKCNYRPYGMDFPMGVATGRFSNGRVASDYISKYLGVKEIVPAYVDKKLQQNNELQQSDLLTGVSFASGGAGYLPQTSESWKVTTMLDQLTYFQDYKKRMKKLVGKKKTKKIVSKGAAIVVAGSNDLIYTYFGNGAQHLKNDVDSFTTMMADSAASFVLQLYGYGARRIGVIGTPPIGCTPSQRVKKKKICNEDLNYAAQLFNSKLVIILGQLSKTLPNSTIVYGDIYSIFSKMLESPEDYGFEEIKKPCCKIGLTKGGVFCKERTLKNMSNASSYLFWDGLHPSQRAYEISNRKLVKKYIHFI.

Residues 1-118 show a composition bias toward pro residues; it reads PPKPQPKPPP…KPPAPSPPKP (118 aa). The tract at residues 1 to 123 is disordered; it reads PPKPQPKPPP…SPPKPQNKTI (123 aa). Ser-132 functions as the Nucleophile in the catalytic mechanism. Catalysis depends on residues Asp-425 and His-428.

This sequence belongs to the 'GDSL' lipolytic enzyme family. As to expression, found in anther, only in male fertile plants.

The polypeptide is Anther-specific proline-rich protein APG (APG) (Brassica napus (Rape)).